The sequence spans 1722 residues: Leucine-rich repeat- and IQ domain-containing protein 1 (1722 aa).

4 disordered regions span residues 23-47, 182-202, 265-285, and 319-367; these read SLEK…TDSV, EDKE…QFQE, RTRF…QQNN, and QEWK…YEEK. Acidic residues predominate over residues 38 to 47; sequence QSDDSDTDSV. The segment covering 265-278 has biased composition (basic and acidic residues); sequence RTRFKDQQEKEKNS. In terms of domain architecture, IQ 1 spans 283–312; the sequence is QNNAAVKIQAKYKAFVAYQKYGPIIKEQIE. 10 LRR repeats span residues 819-840, 841-861, 862-883, 884-905, 970-991, 992-1013, 1014-1035, 1036-1057, 1060-1081, and 1082-1103; these read NLQF…SNCK, KLKY…ENLE, NLCV…DGCT, NIQC…FFLE, NLQQ…CDTP, TIVY…ENCG, LLQI…ENLV, LLRE…SSYW, LLQN…FHFV, and SLEK…IKWF. The region spanning 1117–1157 is the LRRCT domain; sequence NPLLQETNWRDSLLKVLPALRILNGNILNSNSESRTEEHNQ. IQ domains lie at 1335–1364 and 1395–1424; these read KIMA…LHTA and REKA…AIKN. Over residues 1506–1524 the composition is skewed to polar residues; it reads SEHTQFNSRSENKTSSWTP. A disordered region spans residues 1506–1534; the sequence is SEHTQFNSRSENKTSSWTPESKTSRKSLL.

This is Leucine-rich repeat- and IQ domain-containing protein 1 (LRRIQ1) from Homo sapiens (Human).